We begin with the raw amino-acid sequence, 313 residues long: LUC7-related splicing factor homolog (313 aa).

The interval 237 to 313 (RKEREEKLGS…RDRRDRDRRY (77 aa)) is disordered.

The protein belongs to the Luc7 family.

This chain is LUC7-related splicing factor homolog, found in Caenorhabditis elegans.